A 320-amino-acid chain; its full sequence is Lipoyl synthase (320 aa).

Residues 1–28 (MVTVVDRVTDRRLRHPEKAHRPDTSVQK) form a disordered region. Over residues 19–28 (AHRPDTSVQK) the composition is skewed to basic and acidic residues. [4Fe-4S] cluster is bound by residues Cys-59, Cys-64, Cys-70, Cys-85, Cys-89, Cys-92, and Ser-298. Positions 71-287 (WSQRHASFMI…AKIGKVKGFL (217 aa)) constitute a Radical SAM core domain.

It belongs to the radical SAM superfamily. Lipoyl synthase family. It depends on [4Fe-4S] cluster as a cofactor.

It is found in the cytoplasm. It catalyses the reaction [[Fe-S] cluster scaffold protein carrying a second [4Fe-4S](2+) cluster] + N(6)-octanoyl-L-lysyl-[protein] + 2 oxidized [2Fe-2S]-[ferredoxin] + 2 S-adenosyl-L-methionine + 4 H(+) = [[Fe-S] cluster scaffold protein] + N(6)-[(R)-dihydrolipoyl]-L-lysyl-[protein] + 4 Fe(3+) + 2 hydrogen sulfide + 2 5'-deoxyadenosine + 2 L-methionine + 2 reduced [2Fe-2S]-[ferredoxin]. The protein operates within protein modification; protein lipoylation via endogenous pathway; protein N(6)-(lipoyl)lysine from octanoyl-[acyl-carrier-protein]: step 2/2. Functionally, catalyzes the radical-mediated insertion of two sulfur atoms into the C-6 and C-8 positions of the octanoyl moiety bound to the lipoyl domains of lipoate-dependent enzymes, thereby converting the octanoylated domains into lipoylated derivatives. The polypeptide is Lipoyl synthase (Bartonella henselae (strain ATCC 49882 / DSM 28221 / CCUG 30454 / Houston 1) (Rochalimaea henselae)).